Reading from the N-terminus, the 652-residue chain is Forkhead box protein O1 (652 aa).

Disordered regions lie at residues 1 to 62 (MAEA…ASAS) and 112 to 154 (VHPA…SSRR). Residue Thr24 is modified to Phosphothreonine; by PKB/AKT1 or PKB/AKT2 and SGK1. Residues 35–62 (SNSTTSSPAPSGGAAANPDAAASLASAS) show a composition bias toward low complexity. Residues 114–133 (PAPPQPPPTGPLSQPPPVPP) are compositionally biased toward pro residues. A compositionally biased stretch (low complexity) spans 134-146 (SAAAAAGPLAGQP). Residues 156–232 (AWGNLSYADL…VQNEGTGKSS (77 aa)) constitute a DNA-binding region (fork-head). 2 DNA-binding regions span residues 208–215 (NSIRHNLS) and 231–234 (SSWW). Residue Ser209 is modified to Phosphoserine; by STK4/MST1. A phosphoserine mark is found at Ser215, Ser231, and Ser232. Disordered regions lie at residues 231 to 342 (SSWW…DVHS) and 383 to 410 (SLTVSTQSSPGSMMQQTPCYSFAPPNTS). N6-acetyllysine occurs at positions 242 and 245. Phosphoserine; by CDK1 is present on Ser246. An omega-N-methylarginine; by PRMT1 mark is found at Arg248 and Arg250. The Nuclear localization signal signature appears at 248-250 (RRR). Ser253 bears the Phosphoserine; by PKB/AKT1 and SGK1 mark. N6-acetyllysine occurs at positions 259, 262, and 271. Residues 261–272 (AKSRGRAAKKKA) show a composition bias toward basic residues. Positions 280–562 (GPGDSPGSQF…TPVKTPLQVP (283 aa)) are sufficient for interaction with NLK. Phosphoserine is present on residues Ser284 and Ser295. Over residues 306-323 (NWSTFRPRTSSNASTISG) the composition is skewed to polar residues. Phosphoserine; by PKB/AKT1 or PKB/AKT2 is present on Ser316. Ser319 carries the phosphoserine; by CK1 and SGK1 modification. A Phosphoserine; by CK1 modification is found at Ser322. Residue Ser326 is modified to Phosphoserine. Thr330 carries the post-translational modification Phosphothreonine. The tract at residues 360 to 456 (SEISNPENME…GGLNQYNCAP (97 aa)) is required for interaction with RUNX2. Polar residues predominate over residues 392-401 (PGSMMQQTPC). Lys420 bears the N6-acetyllysine mark. Residues 459–463 (LKELL) carry the Required for interaction with SIRT1 motif.

As to quaternary structure, interacts with EP300 and CREBBP; the interactions acetylate FOXO1. Interacts with the 14-3-3 proteins, YWHAG and YWHAZ; the interactions require insulin-stimulated phosphorylation on Thr-24, promote nuclear exit and loss of transcriptional activity. Interacts with SKP2; the interaction ubiquitinates FOXO1 leading to its proteasomal degradation. Interacts with PMRT1; methylates FOXO1, prevents PKB/AKT1 phosphorylation and retains FOXO1 in the nucleus. Interacts (via an N-terminal domain) with FCOR; the interaction is direct, occurs in a forskolin-independent manner and prevents SIRT1 binding to FOXO1. Interacts (via the C-terminal half) with ATF4 (via its DNA-binding domain); the interaction occurs in osteoblasts, regulates glucose homeostasis via suppression of beta-cell proliferation and subsequent decrease in insulin production. Interacts with RUNX2; the interaction inhibits RUNX2 transcriptional activity and mediates the IGF1/insulin-dependent BGLAP expression in osteoblasts. Interacts with PPP2R1A; the interaction regulates the dephosphorylation of FOXO1 at Thr-24 and Ser-253 leading to its nuclear import. Binds to CDK1. Interacts with LRPPRC. Interacts with RUNX2; the interaction inhibits RUNX2 transcriptional activity and mediates the IGF1/insulin-dependent BGLAP expression in osteoblasts. Interacts with NLK. Interacts with SIRT1; the interaction results in the deacetylation of FOXO1 leading to activation of FOXO1-mediated transcription of genes involved in DNA repair and stress resistance. The interaction requires the presence of KRIT1 and is inhibited by FCOR. Interacts with SIRT2; the interaction is disrupted in response to oxidative stress or serum deprivation, leading to increased level of acetylated FOXO1, which promotes stress-induced autophagy by stimulating E1-like activating enzyme ATG7. Interacts (acetylated form) with ATG7; the interaction is increased in response to oxidative stress or serum deprivation and promotes the autophagic process leading to cell death. Interacts (acetylated form) with PPARG. Interacts with XBP1 isoform 2; this interaction is direct and leads to FOXO1 ubiquitination and degradation via the proteasome pathway. Interacts (via the Fork-head domain) with CEBPA; the interaction increases when FOXO1 is deacetylated. Interacts with WDFY2. Forms a complex with WDFY2 and AKT1. Interacts with CRY1. Interacts with PPIA/CYPA; the interaction promotes FOXO1 dephosphorylation, nuclear accumulation and transcriptional activity. Interacts with TOX4; FOXO1 is required for full induction of TOX4-dependent activity and the interaction is inhibited by insulin. Interacts (when phosphorylated on Ser-253) with STUB1/CHIP. In terms of processing, phosphorylation by NLK promotes nuclear export and inhibits the transcriptional activity. In response to growth factors, phosphorylation on Thr-24, Ser-253 and Ser-319 by PKB/AKT1 promotes nuclear export and inactivation of transactivational activity. Phosphorylation on Thr-24 is required for binding 14-3-3 proteins. Phosphorylation of Ser-253 decreases DNA-binding activity and promotes the phosphorylation of Thr-24 and Ser-316, permitting phosphorylation of Ser-319 and Ser-322, probably by CDK1, leading to nuclear exclusion and loss of function. Stress signals, such as response to oxygen or nitric oxide, attenuate the PKB/AKT1-mediated phosphorylation leading to nuclear retention. Phosphorylation of Ser-326 is independent of IGF1 and leads to reduced function. Dephosphorylated on Thr-24 and Ser-253 by PP2A in beta-cells under oxidative stress leading to nuclear retention. Phosphorylation of Ser-246 by CDK1 disrupts binding of 14-3-3 proteins leading to nuclear accumulation and has no effect on DNA-binding nor transcriptional activity. Phosphorylation by STK4/MST1 on Ser-209, upon oxidative stress, inhibits binding to 14-3-3 proteins and nuclear export. PPIA/CYPA promotes its dephosphorylation on Ser-253. Post-translationally, ubiquitinated by SKP2. Ubiquitinated, leading to proteasomal degradation. Ubiquitinated by STUB1/CHIP; when Ser-253 is phosphorylated. Methylation inhibits PKB/AKT1-mediated phosphorylation at Ser-253, promoting nuclear retention and increasing the transcriptional activity and cell death. Methylation increased by oxidative stress. In terms of processing, acetylation at Lys-259 and Lys-271 are necessary for autophagic cell death induction. Deacetylated by SIRT2 in response to oxidative stress or serum deprivation, thereby negatively regulating FOXO1-mediated autophagic cell death. Once in the nucleus, acetylated by CREBBP/EP300. Acetylation diminishes the interaction with target DNA and attenuates the transcriptional activity. It increases the phosphorylation at Ser-253, and is required for the transcriptional inhibition by FCOR. Deacetylation by SIRT1 results in reactivation of the transcriptional activity. Acetylation of FOXO1 diminishes its binding to PPARG in adipocytes. Deacetylated by SIRT2; deacetylation of FOXO1 directly increases its repressive binding to PPARG and inhibits adipocyte differentiation. Oxidative stress by hydrogen peroxide treatment appears to promote deacetylation and uncoupling of insulin-induced phosphorylation. By contrast, resveratrol acts independently of acetylation. Acetylated at Lys-420, promoting its localization to the nucleus and transcription factor activity. Deacetylation at Lys-420 by SIRT6, promotes its translocation into the cytoplasm, preventing its transcription factor activity. Deacetylation and subsequent inhibition by SIRT6 has different effects depending on cell types: it inhibits gluconeogenesis in hepatocytes, promotes glucose sensing in pancreatic beta-cells and regulates lipid catabolism in brown adipocytes. As to expression, expressed in liver, white and brown adipose tissues (at protein level).

It localises to the cytoplasm. Its subcellular location is the nucleus. In terms of biological role, transcription factor that is the main target of insulin signaling and regulates metabolic homeostasis in response to oxidative stress. Binds to the insulin response element (IRE) with consensus sequence 5'-TT[G/A]TTTTG-3' and the related Daf-16 family binding element (DBE) with consensus sequence 5'-TT[G/A]TTTAC-3'. Activity suppressed by insulin. Main regulator of redox balance and osteoblast numbers and controls bone mass. Orchestrates the endocrine function of the skeleton in regulating glucose metabolism. Also acts as a key regulator of chondrogenic commitment of skeletal progenitor cells in response to lipid availability: when lipids levels are low, translocates to the nucleus and promotes expression of SOX9, which induces chondrogenic commitment and suppresses fatty acid oxidation. Acts synergistically with ATF4 to suppress osteocalcin/BGLAP activity, increasing glucose levels and triggering glucose intolerance and insulin insensitivity. Also suppresses the transcriptional activity of RUNX2, an upstream activator of osteocalcin/BGLAP. Acts as an inhibitor of glucose sensing in pancreatic beta cells by acting as a transcription repressor and suppressing expression of PDX1. In hepatocytes, promotes gluconeogenesis by acting together with PPARGC1A and CEBPA to activate the expression of genes such as IGFBP1, G6PC1 and PCK1. Also promotes gluconeogenesis by directly promoting expression of PPARGC1A and G6PC1. Important regulator of cell death acting downstream of CDK1, PKB/AKT1 and STK4/MST1. Promotes neural cell death. Mediates insulin action on adipose tissue. Regulates the expression of adipogenic genes such as PPARG during preadipocyte differentiation and, adipocyte size and adipose tissue-specific gene expression in response to excessive calorie intake. Regulates the transcriptional activity of GADD45A and repair of nitric oxide-damaged DNA in beta-cells. Required for the autophagic cell death induction in response to starvation or oxidative stress in a transcription-independent manner. Mediates the function of MLIP in cardiomyocytes hypertrophy and cardiac remodeling. Positive regulator of apoptosis in cardiac smooth muscle cells as a result of its transcriptional activation of pro-apoptotic genes. Regulates endothelial cell (EC) viability and apoptosis in a PPIA/CYPA-dependent manner via transcription of CCL2 and BCL2L11 which are involved in EC chemotaxis and apoptosis. The polypeptide is Forkhead box protein O1 (Foxo1) (Mus musculus (Mouse)).